Reading from the N-terminus, the 153-residue chain is Natriuretic peptides A (153 aa).

Positions 1-25 are cleaved as a signal peptide; the sequence is MGSFSTITASFLLFLACQLLWQTGA. Propeptides lie at residues 26–123 and 93–103; these read NPVY…AAPR and DGGALGRGSWD. Residues 62 to 104 are disordered; the sequence is VLSEQNEEAGAALSPLPEVPPWAGEVNPAQRDGGALGRGSWDS. A Phosphoserine modification is found at Ser129. Cys130 and Cys146 are oxidised to a cystine. Positions 147–151 are important for degradation of atrial natriuretic peptide by IDE; it reads NSFRY.

The protein belongs to the natriuretic peptide family. As to quaternary structure, homodimer; disulfide-linked antiparallel dimer. In terms of processing, the precursor molecule is proteolytically cleaved by CORIN at Arg-123 to produce the atrial natriuretic peptide. Undergoes further proteolytic cleavage by unknown proteases to give rise to long-acting natriuretic peptide, vessel dilator and kaliuretic peptide. Additional processing gives rise to the auriculin and atriopeptin peptides. In the kidneys, alternative processing by an unknown protease results in the peptide urodilatin. Cleavage by MME initiates degradation of the factor and thereby regulates its activity. Degradation by IDE results in reduced activation of NPR1 (in vitro). During IDE degradation, the resulting products can temporarily stimulate NPR2 to produce cGMP, before the fragments are completely degraded and inactivated by IDE (in vitro). Post-translationally, degraded by IDE. In terms of processing, phosphorylation on Ser-129 decreases vasorelaxant activity.

It localises to the secreted. The protein resides in the perikaryon. It is found in the cell projection. Hormone that plays a key role in mediating cardio-renal homeostasis, and is involved in vascular remodeling and regulating energy metabolism. Acts by specifically binding and stimulating NPR1 to produce cGMP, which in turn activates effector proteins, such as PRKG1, that drive various biological responses. Regulates vasodilation, natriuresis, diuresis and aldosterone synthesis and is therefore essential for regulating blood pressure, controlling the extracellular fluid volume and maintaining the fluid-electrolyte balance. Also involved in inhibiting cardiac remodeling and cardiac hypertrophy by inducing cardiomyocyte apoptosis and attenuating the growth of cardiomyocytes and fibroblasts. Plays a role in female pregnancy by promoting trophoblast invasion and spiral artery remodeling in uterus, and thus prevents pregnancy-induced hypertension. In adipose tissue, acts in various cGMP- and PKG-dependent pathways to regulate lipid metabolism and energy homeostasis. This includes up-regulating lipid metabolism and mitochondrial oxygen utilization by activating the AMP-activated protein kinase (AMPK), and increasing energy expenditure by acting via MAPK11 to promote the UCP1-dependent thermogenesis of brown adipose tissue. Binds the clearance receptor NPR3 which removes the hormone from circulation. Functionally, may have a role in cardio-renal homeostasis through regulation of natriuresis, diuresis, vasodilation, and inhibiting aldosterone synthesis. In vitro, promotes the production of cGMP and induces vasodilation. May promote natriuresis, at least in part, by enhancing prostaglandin E2 synthesis resulting in the inhibition of renal Na+-K+-ATPase. However reports on the involvement of this peptide in mammal blood volume and blood pressure homeostasis are conflicting; according to a report, in vivo it is not sufficient to activate cGMP and does not inhibit collecting duct transport nor effect diuresis and natriuresis. Appears to bind to specific receptors that are distinct from the receptors bound by atrial natriuretic peptide and vessel dilator. Possibly enhances protein excretion in urine by decreasing proximal tubular protein reabsorption. Its function is as follows. May have a role in cardio-renal homeostasis through regulation of natriuresis, diuresis, and vasodilation. In vitro, promotes the production of cGMP and induces vasodilation. May promote natriuresis, at least in part, by enhancing prostaglandin E2 synthesis resulting in the inhibition of renal Na+-K+-ATPase. However reports on the involvement of this peptide in mammal blood volume and blood pressure homeostasis are conflicting; according to a report it is not sufficient to activate cGMP and does not inhibit collecting duct transport nor effect diuresis and natriuresis. Appears to bind to specific receptors that are distinct from the receptors bound by the atrial natriuretic and long-acting natriuretic peptides. Possibly functions in protein excretion in urine by maintaining the integrity of the proximal tubules and enhancing protein excretion by decreasing proximal tubular protein reabsorption. In terms of biological role, may have a role in cardio-renal homeostasis through regulation of diuresis and inhibiting aldosterone synthesis. In vitro, promotes the production of cGMP and induces vasodilation. May promote natriuresis, at least in part, by enhancing prostaglandin E2 synthesis resulting in the inhibition of renal Na+-K+-ATPase. May have a role in potassium excretion but not sodium excretion (natriuresis). Possibly enhances protein excretion in urine by decreasing proximal tubular protein reabsorption. Hormone produced in the kidneys that appears to be important for maintaining cardio-renal homeostasis. Mediates vasodilation, natriuresis and diuresis primarily in the renal system, in order to maintain the extracellular fluid volume and control the fluid-electrolyte balance. Specifically binds and stimulates cGMP production by renal transmembrane receptors, likely NPR1. Urodilatin not ANP, may be the natriuretic peptide responsible for the regulation of sodium and water homeostasis in the kidney. Functionally, may have a role in cardio-renal homeostasis through regulation of natriuresis and vasodilation. In vivo promotes natriuresis and in vitro, vasodilates renal artery strips. Its function is as follows. May have a role in cardio-renal homeostasis through regulation of regulation of natriuresis and vasodilation. In vivo promotes natriuresis. In vitro, vasodilates intestinal smooth muscle but not smooth muscle strips. In terms of biological role, may have a role in cardio-renal homeostasis through regulation of natriuresis and vasodilation. In vivo promotes natriuresis. In vitro, selectively vasodilates intestinal and vascular smooth muscle strips. May have a role in cardio-renal homeostasis through regulation of natriuresis and vasodilation. In vivo promotes natriuresis. In vitro, selectively vasodilates intestinal smooth muscle but not vascular smooth muscle strips. The chain is Natriuretic peptides A (NPPA) from Felis catus (Cat).